Here is a 151-residue protein sequence, read N- to C-terminus: MGRMHSRGKGISSSALPYKRTPPSWLKISSQDVEENICKFAKKGLTPSQIGVILRDSHGIAQVNSVTGSKILRILKAHGLAPEIPEDLYHLIKKAVSIRKHLERNRKDKDSKFRLILVESRIHRLARYYKKTKKLPPVWKYESTTASTLVA.

The protein belongs to the universal ribosomal protein uS15 family.

The protein is Small ribosomal subunit protein uS15 (RPS13) of Glycine max (Soybean).